The chain runs to 335 residues: Nucleoid-associated protein KPK_1538 (335 aa).

The protein belongs to the YejK family.

Its subcellular location is the cytoplasm. It localises to the nucleoid. In Klebsiella pneumoniae (strain 342), this protein is Nucleoid-associated protein KPK_1538.